The sequence spans 68 residues: Large ribosomal subunit protein uL29 (68 aa).

It belongs to the universal ribosomal protein uL29 family.

In Bradyrhizobium sp. (strain BTAi1 / ATCC BAA-1182), this protein is Large ribosomal subunit protein uL29.